The sequence spans 387 residues: Flap endonuclease 1 (387 aa).

The N-domain stretch occupies residues methionine 1–arginine 104. A Mg(2+)-binding site is contributed by aspartate 34. Arginine 47 and arginine 70 together coordinate DNA. The Mg(2+) site is built by aspartate 86, glutamate 158, glutamate 160, aspartate 179, and aspartate 181. Residues glycine 122 to tyrosine 253 form an I-domain region. Glutamate 158 contacts DNA. Glycine 231 and aspartate 233 together coordinate DNA. Aspartate 233 contributes to the Mg(2+) binding site. Residues threonine 336–phenylalanine 344 form an interaction with PCNA region. Residues threonine 346–lysine 387 are disordered.

The protein belongs to the XPG/RAD2 endonuclease family. FEN1 subfamily. In terms of assembly, interacts with PCNA. Three molecules of FEN1 bind to one PCNA trimer with each molecule binding to one PCNA monomer. PCNA stimulates the nuclease activity without altering cleavage specificity. Requires Mg(2+) as cofactor. Post-translationally, phosphorylated. Phosphorylation upon DNA damage induces relocalization to the nuclear plasma.

Its subcellular location is the nucleus. It is found in the nucleolus. The protein localises to the nucleoplasm. The protein resides in the mitochondrion. Functionally, structure-specific nuclease with 5'-flap endonuclease and 5'-3' exonuclease activities involved in DNA replication and repair. During DNA replication, cleaves the 5'-overhanging flap structure that is generated by displacement synthesis when DNA polymerase encounters the 5'-end of a downstream Okazaki fragment. It enters the flap from the 5'-end and then tracks to cleave the flap base, leaving a nick for ligation. Also involved in the long patch base excision repair (LP-BER) pathway, by cleaving within the apurinic/apyrimidinic (AP) site-terminated flap. Acts as a genome stabilization factor that prevents flaps from equilibrating into structures that lead to duplications and deletions. Also possesses 5'-3' exonuclease activity on nicked or gapped double-stranded DNA, and exhibits RNase H activity. Also involved in replication and repair of rDNA and in repairing mitochondrial DNA. This chain is Flap endonuclease 1, found in Drosophila erecta (Fruit fly).